The primary structure comprises 66 residues: Large ribosomal subunit protein uL29 (66 aa).

It belongs to the universal ribosomal protein uL29 family.

The polypeptide is Large ribosomal subunit protein uL29 (Thermosipho melanesiensis (strain DSM 12029 / CIP 104789 / BI429)).